Consider the following 307-residue polypeptide: Capsid assembly scaffolding protein (307 aa).

Acidic residues-rich tracts occupy residues 45 to 54 (IELASDEVET) and 83 to 101 (EPTD…EGSE). Residues 45 to 105 (IELASDEVET…GTEGSEEFTP (61 aa)) are disordered.

This sequence belongs to the T7likevirus capsid assembly scaffolding protein family.

Its function is as follows. Scaffolding protein involved in the icosahedric procapsid assembly. Coassembles with the capsid proteins to form the procapsid, in which the scaffolding protein is found within the external shell of icosahedrally arranged capsid protein subunits. In a subsequent step the scaffolding protein molecules are released from the procapsid. Facilitates assembly by binding to gp10 hexamers but not the pentamers and locking them into a morphogenically correct conformation. This Escherichia coli (Bacteriophage T7) protein is Capsid assembly scaffolding protein.